The following is a 378-amino-acid chain: Peptide methionine sulfoxide reductase MsrA/MsrB (378 aa).

The tract at residues 40–197 is peptide methionine sulfoxide reductase A; sequence QQATLAGGCF…KVRYNYYRYA (158 aa). C48 is a catalytic residue. The 123-residue stretch at 240 to 362 folds into the MsrB domain; that stretch reads DEQIRAKLTS…NSAAMRFIPK (123 aa). C351 functions as the Nucleophile in the catalytic mechanism.

The protein in the N-terminal section; belongs to the MsrA Met sulfoxide reductase family. In the C-terminal section; belongs to the MsrB Met sulfoxide reductase family.

It carries out the reaction L-methionyl-[protein] + [thioredoxin]-disulfide + H2O = L-methionyl-(S)-S-oxide-[protein] + [thioredoxin]-dithiol. It catalyses the reaction [thioredoxin]-disulfide + L-methionine + H2O = L-methionine (S)-S-oxide + [thioredoxin]-dithiol. The catalysed reaction is L-methionyl-[protein] + [thioredoxin]-disulfide + H2O = L-methionyl-(R)-S-oxide-[protein] + [thioredoxin]-dithiol. Its function is as follows. Has an important function as a repair enzyme for proteins that have been inactivated by oxidation. Catalyzes the reversible oxidation-reduction of methionine sulfoxide in proteins to methionine. This chain is Peptide methionine sulfoxide reductase MsrA/MsrB (msrAB), found in Vibrio cholerae serotype O1 (strain ATCC 39315 / El Tor Inaba N16961).